A 426-amino-acid chain; its full sequence is Mediator of RNA polymerase II transcription subunit 4 (426 aa).

Residues 1–56 (MLQHQIVQSPARLGLTGPGSPSVQNPTPTRHGHPTSSSSSQSQHQQIQQQPNLLPS) are disordered. Positions 19–28 (GSPSVQNPTP) are enriched in polar residues. The segment covering 36–56 (SSSSSQSQHQQIQQQPNLLPS) has biased composition (low complexity). Positions 160-212 (TELQEILDLQDAKQKVAREIKSKDSSLLAFANKLKDAERVLDMLVDDYSDYRK) form a coiled coil. Disordered regions lie at residues 214 to 236 (KRSK…STTV) and 373 to 426 (IAAP…DDED). The span at 406–426 (ILEDDDSSDYSSDDASSDDED) shows a compositional bias: acidic residues.

The protein belongs to the Mediator complex subunit 4 family. Component of the Mediator complex.

Its subcellular location is the nucleus. In terms of biological role, component of the Mediator complex, a coactivator involved in the regulated transcription of nearly all RNA polymerase II-dependent genes. Mediator functions as a bridge to convey information from gene-specific regulatory proteins to the basal RNA polymerase II transcription machinery. The Mediator complex, having a compact conformation in its free form, is recruited to promoters by direct interactions with regulatory proteins and serves for the assembly of a functional preinitiation complex with RNA polymerase II and the general transcription factors. The sequence is that of Mediator of RNA polymerase II transcription subunit 4 (MED4) from Arabidopsis thaliana (Mouse-ear cress).